Consider the following 421-residue polypeptide: CinA-like protein (421 aa).

Belongs to the CinA family.

In Mycobacterium sp. (strain JLS), this protein is CinA-like protein.